The chain runs to 318 residues: Acetyl-coenzyme A carboxylase carboxyl transferase subunit alpha (318 aa).

In terms of domain architecture, CoA carboxyltransferase C-terminal spans Arg-39–Lys-297.

It belongs to the AccA family. In terms of assembly, acetyl-CoA carboxylase is a heterohexamer composed of biotin carboxyl carrier protein (AccB), biotin carboxylase (AccC) and two subunits each of ACCase subunit alpha (AccA) and ACCase subunit beta (AccD).

Its subcellular location is the cytoplasm. It catalyses the reaction N(6)-carboxybiotinyl-L-lysyl-[protein] + acetyl-CoA = N(6)-biotinyl-L-lysyl-[protein] + malonyl-CoA. It participates in lipid metabolism; malonyl-CoA biosynthesis; malonyl-CoA from acetyl-CoA: step 1/1. Component of the acetyl coenzyme A carboxylase (ACC) complex. First, biotin carboxylase catalyzes the carboxylation of biotin on its carrier protein (BCCP) and then the CO(2) group is transferred by the carboxyltransferase to acetyl-CoA to form malonyl-CoA. The sequence is that of Acetyl-coenzyme A carboxylase carboxyl transferase subunit alpha from Bartonella tribocorum (strain CIP 105476 / IBS 506).